We begin with the raw amino-acid sequence, 34 residues long: MSDINTARLPFYQFPDFKYPCVGDDIEMVLARGE.

Positions 1–10 (MSDINTARLP) are excised as a propeptide. Residues 11–20 (FYQFPDFKYP) constitute a cross-link (cyclopeptide (Phe-Pro)). A propeptide spanning residues 21 to 34 (CVGDDIEMVLARGE) is cleaved from the precursor.

This sequence belongs to the MSDIN fungal toxin family. In terms of processing, processed by the macrocyclase-peptidase enzyme POPB to yield a toxic cyclic decapeptide. POPB first removes 10 residues from the N-terminus. Conformational trapping of the remaining peptide forces the enzyme to release this intermediate rather than proceed to macrocyclization. The enzyme rebinds the remaining peptide in a different conformation and catalyzes macrocyclization of the N-terminal 10 residues.

Functionally, probable toxin that belongs to the MSDIN-like toxin family responsible for a large number of food poisoning cases and deaths. The chain is MSDIN-like toxin proprotein 2 from Amanita bisporigera (Destroying angel).